Here is a 473-residue protein sequence, read N- to C-terminus: H(+)/Cl(-) exchange transporter ClcA (473 aa).

The Cytoplasmic portion of the chain corresponds to 1-32; the sequence is MKTDTPSLETPQAARLRRRQLIRQLLERDKTP. The chain crosses the membrane as a helical span at residues 33-69; it reads LAILFMAAVVGTLVGLAAVAFDKGVAWLQNQRMEALV. Residues 70-76 are Periplasmic-facing; it reads HTADNYP. A helical membrane pass occupies residues 77 to 100; the sequence is LLLTVAFLCSAVLAMFGYFLVRKY. Residues 106-110 carry the Selectivity filter part_1 motif; sequence GSGIP. S107 contributes to the chloride binding site. Residues 109-116 constitute an intramembrane region (helical); that stretch reads IPEIEGAL. The Cytoplasmic portion of the chain corresponds to 117–123; sequence EDQRPVR. The next 2 membrane-spanning stretches (helical) occupy residues 124–141 and 148–166; these read WWRVLPVKFFGGLGTLGG and EGPTVQIGGNIGRMVLDIF. A Selectivity filter part_2 motif is present at residues 146-150; it reads GREGP. Residues 167-176 lie on the Cytoplasmic side of the membrane; sequence RLKGDEARHT. Intramembrane regions (helical) lie at residues 177 to 189 and 193 to 201; these read LLATGAAAGLAAA and PLAGILFII. The Cytoplasmic portion of the chain corresponds to 202-214; that stretch reads EEMRPQFRYTLIS. A helical membrane pass occupies residues 215–232; the sequence is IKAVFIGVIMSTIMYRIF. Residues 233–252 lie on the Periplasmic side of the membrane; sequence NHEVALIDVGKLSDAPLNTL. The chain crosses the membrane as a helical span at residues 253-281; sequence WLYLILGIIFGIFGPIFNKWVLGMQDLLH. The Cytoplasmic segment spans residues 282-287; that stretch reads RVHGGN. The helical transmembrane segment at 288-309 threads the bilayer; that stretch reads ITKWVLMGGAIGGLCGLLGFVA. Topologically, residues 310–329 are periplasmic; it reads PATSGGGFNLIPIATAGNFS. A run of 2 helical transmembrane segments spans residues 330–349 and 355–376; these read MGMLVFIFVARVITTLLCFS and GIFAPMLALGTVLGTAFGMVVV. Residues 355 to 359 carry the Selectivity filter part_3 motif; that stretch reads GIFAP. Chloride is bound by residues I356 and F357. Residues 377 to 386 lie on the Periplasmic side of the membrane; that stretch reads ELFPQYHLEA. Positions 387 to 401 form an intramembrane region, helical; that stretch reads GTFAIAGMGALLAAS. An intramembrane region (note=Loop between two helices) is located at residues 402-404; that stretch reads IRA. An intramembrane region (helical) is located at residues 405–416; that stretch reads PLTGIILVLEMT. The note=Loop between two helices intramembrane region spans 417 to 421; it reads DNYQL. A helical membrane pass occupies residues 422–438; sequence ILPMIITGLGATLLAQF. At 439–473 the chain is on the cytoplasmic side; that stretch reads TGGKPLYSEILARTLAKQEAEQLARSKAASASENT. Y445 contributes to the chloride binding site.

Belongs to the chloride channel (TC 2.A.49) family. ClcA subfamily. Homodimer.

It is found in the cell inner membrane. The enzyme catalyses 2 chloride(in) + H(+)(out) = 2 chloride(out) + H(+)(in). Functionally, proton-coupled chloride transporter. Functions as antiport system and exchanges two chloride ions for 1 proton. Probably acts as an electrical shunt for an outwardly-directed proton pump that is linked to amino acid decarboxylation, as part of the extreme acid resistance (XAR) response. The polypeptide is H(+)/Cl(-) exchange transporter ClcA (Shigella boydii serotype 4 (strain Sb227)).